A 541-amino-acid chain; its full sequence is Pseudokinase FAM20A (541 aa).

Residues 1–33 form the signal peptide; the sequence is MPGLRRDRLLALLLLGALFSADLYFHLWPQVQR. Residues Asn70, Asn145, and Asn287 are each glycosylated (N-linked (GlcNAc...) asparagine). 4 cysteine pairs are disulfide-bonded: Cys314–Cys330, Cys319–Cys323, Cys378–Cys452, and Cys453–Cys512. Asn388 carries an N-linked (GlcNAc...) asparagine glycan. Residue Asn538 is glycosylated (N-linked (GlcNAc...) asparagine).

This sequence belongs to the FAM20 family. As to quaternary structure, interacts with FAM20C; probably forming a heterotetramer of 2 subunits of FAM20A and 2 subunits of FAM20C. N-glycosylated. In terms of tissue distribution, in the mammary gland, expressed at higher levels in lactating mice than in virgin mice. Observed throughout the tissues of the mandibular incisor, including the secretory and maturation stage ameloblasts, the suprabasal layers of the gingival epithelium and the odontoblasts. Weak expression in the enamel matrix.

Its subcellular location is the secreted. It localises to the golgi apparatus. The protein localises to the endoplasmic reticulum. In terms of biological role, pseudokinase that acts as an allosteric activator of the Golgi serine/threonine protein kinase FAM20C and is involved in biomineralization of teeth. Forms a complex with FAM20C and increases the ability of FAM20C to phosphorylate the proteins that form the 'matrix' that guides the deposition of the enamel minerals. The protein is Pseudokinase FAM20A of Mus musculus (Mouse).